The chain runs to 124 residues: uncharacterized protein (124 aa).

Functionally, not required for the biogenesis of c-type cytochromes. This is an uncharacterized protein from Rhodobacter capsulatus (strain ATCC BAA-309 / NBRC 16581 / SB1003).